The primary structure comprises 234 residues: Ubiquinone biosynthesis O-methyltransferase (234 aa).

Arginine 36, glycine 56, aspartate 77, and methionine 125 together coordinate S-adenosyl-L-methionine.

This sequence belongs to the methyltransferase superfamily. UbiG/COQ3 family.

The enzyme catalyses a 3-demethylubiquinol + S-adenosyl-L-methionine = a ubiquinol + S-adenosyl-L-homocysteine + H(+). It carries out the reaction a 3-(all-trans-polyprenyl)benzene-1,2-diol + S-adenosyl-L-methionine = a 2-methoxy-6-(all-trans-polyprenyl)phenol + S-adenosyl-L-homocysteine + H(+). It participates in cofactor biosynthesis; ubiquinone biosynthesis. Its function is as follows. O-methyltransferase that catalyzes the 2 O-methylation steps in the ubiquinone biosynthetic pathway. In Actinobacillus pleuropneumoniae serotype 7 (strain AP76), this protein is Ubiquinone biosynthesis O-methyltransferase.